Here is a 106-residue protein sequence, read N- to C-terminus: Ig kappa chain C region, A allele (106 aa).

One can recognise an Ig-like domain in the interval 5-102; the sequence is PTVSIFPPSM…SSSPVVKSFN (98 aa). Cysteine 26 and cysteine 86 are oxidised to a cystine.

This is Ig kappa chain C region, A allele from Rattus norvegicus (Rat).